Consider the following 353-residue polypeptide: Virulence plasmid protein pGP2-D (353 aa).

This is Virulence plasmid protein pGP2-D from Chlamydia muridarum (strain MoPn / Nigg).